The following is a 1035-amino-acid chain: Teashirt homolog 2 (1035 aa).

The interval 1–92 (MPRRKQQAPK…ESLLSDASDQ (92 aa)) is disordered. A coiled-coil region spans residues 13–42 (AGYAQEEQLKEEEEIKEEEEEEEDSGSVAQ). Positions 21 to 37 (LKEEEEIKEEEEEEEDS) are enriched in acidic residues. Composition is skewed to polar residues over residues 39-49 (SVAQLQGSNDP) and 66-92 (SYQN…ASDQ). Lys-189 participates in a covalent cross-link: Glycyl lysine isopeptide (Lys-Gly) (interchain with G-Cter in SUMO2). 2 consecutive C2H2-type zinc fingers follow at residues 216 to 240 (FRCR…ETGH) and 276 to 300 (LKCM…KTKH). The segment at 240–266 (HYQDDNRKKDKLRPTSYSKPRKRAFQD) is disordered. Glycyl lysine isopeptide (Lys-Gly) (interchain with G-Cter in SUMO2) cross-links involve residues Lys-307 and Lys-316. Residues 381–405 (LKCMECGSSHDTLQQLTTHMMVTGH) form a C2H2-type 3; atypical zinc finger. A Glycyl lysine isopeptide (Lys-Gly) (interchain with G-Cter in SUMO2) cross-link involves residue Lys-418. Low complexity predominate over residues 432-450 (SLSDAPSSDSLAPKPSSNS). Residues 432–496 (SLSDAPSSDS…DPLQKPLDPA (65 aa)) are disordered. A compositionally biased stretch (basic and acidic residues) spans 460–483 (ELKRESKKEKPEELRTDEKVLKSE). Residues Lys-462, Lys-481, Lys-498, and Lys-602 each participate in a glycyl lysine isopeptide (Lys-Gly) (interchain with G-Cter in SUMO2) cross-link. Disordered stretches follow at residues 600 to 674 (QVKK…VEPV) and 764 to 791 (QPID…PQKH). A compositionally biased stretch (basic and acidic residues) spans 601–669 (VKKEPEDKEE…KDGGEKEKAQ (69 aa)). Residues Lys-801 and Lys-821 each participate in a glycyl lysine isopeptide (Lys-Gly) (interchain with G-Cter in SUMO2) cross-link. A DNA-binding region (homeobox) is located at residues 842 to 912 (RKGRQSNWNP…NVKYQLRKTG (71 aa)). The C2H2-type 4 zinc finger occupies 927-949 (FYCSDCASQFRTPSTYISHLESH). Residues 968-977 (VEQEISRVSS) are compositionally biased toward low complexity. Disordered stretches follow at residues 968-987 (VEQE…TIAG) and 1015-1035 (SKTH…VDEE). Phosphoserine is present on Ser-981. The segment at 995–1018 (FKCKLCCRTFVSKHAVKLHLSKTH) adopts a C2H2-type 5 zinc-finger fold.

This sequence belongs to the teashirt C2H2-type zinc-finger protein family. In terms of assembly, interacts (via homeobox domain) with APBB1 (via PID domain 1). Sumoylated.

The protein localises to the nucleus. In terms of biological role, probable transcriptional regulator involved in developmental processes. May act as a transcriptional repressor (Potential). This chain is Teashirt homolog 2 (TSHZ2), found in Sus scrofa (Pig).